We begin with the raw amino-acid sequence, 280 residues long: Dermonecrotic toxin LgSicTox-alphaIC1 (280 aa).

His-12 is an active-site residue. Residues Glu-32 and Asp-34 each coordinate Mg(2+). His-48 functions as the Nucleophile in the catalytic mechanism. Intrachain disulfides connect Cys-52–Cys-58 and Cys-54–Cys-197. A Mg(2+)-binding site is contributed by Asp-92.

The protein belongs to the arthropod phospholipase D family. Class II subfamily. It depends on Mg(2+) as a cofactor. Expressed by the venom gland.

The protein resides in the secreted. The enzyme catalyses an N-(acyl)-sphingosylphosphocholine = an N-(acyl)-sphingosyl-1,3-cyclic phosphate + choline. It catalyses the reaction an N-(acyl)-sphingosylphosphoethanolamine = an N-(acyl)-sphingosyl-1,3-cyclic phosphate + ethanolamine. The catalysed reaction is a 1-acyl-sn-glycero-3-phosphocholine = a 1-acyl-sn-glycero-2,3-cyclic phosphate + choline. It carries out the reaction a 1-acyl-sn-glycero-3-phosphoethanolamine = a 1-acyl-sn-glycero-2,3-cyclic phosphate + ethanolamine. Its function is as follows. Dermonecrotic toxins cleave the phosphodiester linkage between the phosphate and headgroup of certain phospholipids (sphingolipid and lysolipid substrates), forming an alcohol (often choline) and a cyclic phosphate. This toxin acts on sphingomyelin (SM) with high activity. It may also act on ceramide phosphoethanolamine (CPE), lysophosphatidylcholine (LPC) and lysophosphatidylethanolamine (LPE), but not on lysophosphatidylserine (LPS), and lysophosphatidylglycerol (LPG). It acts by transphosphatidylation, releasing exclusively cyclic phosphate products as second products. Induces platelet aggregation in platelet rich plasma, but not in washed platelet, indicating that this activity is dependent on plasma components. Also induces hemolysis. In vivo, the recombinant protein evokes an intense inflammatory reaction and dermonecrosis, similar to those induced by L.gaucho total venom. Is a good immunogen, capable of inducing immunoprotection in test animals. Functionally, anionic antimicrobial peptide that shows antimicrobial activity against Gram-negative bacteria (MIC=1.15-4.6 uM) (tested on E.coli, P.aeruginosa, and E.cloacae), but not on Gram-negative bacteria (M.luteus, S.aureus, and B.subtilis), neither on fungi and yeasts (A.niger, C.albicans and C.krusei). Does not show hemolytic effects against human erythrocytes, and has no cytotoxic effects against human cervical carcinoma cells (HeLa). The chain is Dermonecrotic toxin LgSicTox-alphaIC1 from Loxosceles gaucho (Spider).